An 888-amino-acid chain; its full sequence is Mitogen-activated protein kinase kinase kinase 12 (888 aa).

Basic and acidic residues predominate over residues 26–42 (MRKLDPDTSDCTPEKDL). Residues 26-104 (MRKLDPDTSD…TGSPESRASR (79 aa)) form a disordered region. 2 positions are modified to phosphothreonine: threonine 37 and threonine 43. Pro residues predominate over residues 64-75 (SPSPGGEPPPEP). Residues 158-399 (ILDLQWVGSG…FRQILLHLDI (242 aa)) form the Protein kinase domain. Residues 164 to 172 (VGSGAQGAV) and lysine 185 each bind ATP. The active-site Proton acceptor is aspartate 269. 2 leucine-zipper regions span residues 423–444 (VKLHFEKIKSEGTCLHRLEEEL) and 476–497 (LNALMLQLELKERELLRREQAL). The disordered stretch occupies residues 557–620 (GVGLPGCPKA…GGLGVGPTAW (64 aa)). Over residues 572–584 (RSRRGKTRHRKAS) the composition is skewed to basic residues. The segment covering 605–615 (GGLGSPGGLGV) has biased composition (gly residues). Residue serine 640 is modified to Phosphoserine. Disordered regions lie at residues 654–731 (RGRG…YQHL) and 743–888 (TRSQ…SLPP). Residues 704–725 (PGEGVGLLGTGREGTTGRGGSR) show a composition bias toward gly residues. Residues 752-763 (SEEEEGEVDSEV) show a composition bias toward acidic residues. Polar residues-rich tracts occupy residues 776 to 789 (NMRQSLSTFSSENP) and 798 to 812 (SEPSPSGTPEVGSTN). Residues 813–823 (TDERPDERSDD) show a composition bias toward basic and acidic residues.

Belongs to the protein kinase superfamily. STE Ser/Thr protein kinase family. MAP kinase kinase kinase subfamily. As to quaternary structure, homodimer. Interacts with MBIP. Mg(2+) serves as cofactor. Autophosphorylated on Ser/Thr. Phosphorylated in cytosol under basal conditions and dephosphorylated when membrane-associated. Post-translationally, the activity of MAP3K12 can be regulated through its proteasomal degradation. APOE, through a receptor-mediated mechanism, activates MAP3K12 by preventing its proteasomal degradation.

The protein localises to the cytoplasm. Its subcellular location is the cell membrane. The catalysed reaction is L-seryl-[protein] + ATP = O-phospho-L-seryl-[protein] + ADP + H(+). The enzyme catalyses L-threonyl-[protein] + ATP = O-phospho-L-threonyl-[protein] + ADP + H(+). In terms of biological role, part of a non-canonical MAPK signaling pathway. Activated by APOE, enhances the AP-1-mediated transcription of APP, via a MAP kinase signal transduction pathway composed of MAP2K7 and MAPK1/ERK2 and MAPK3/ERK1. May be an activator of the JNK/SAPK pathway. In Rattus norvegicus (Rat), this protein is Mitogen-activated protein kinase kinase kinase 12 (Map3k12).